The following is a 250-amino-acid chain: Formylaminopyrimidine transport permease protein ThiX (250 aa).

The next 6 membrane-spanning stretches (helical) occupy residues 5-25 (YQAL…EISA), 62-82 (IISI…LLMF), 94-114 (LLVA…VLWF), 115-135 (GYSI…PITV), 172-192 (LPSF…GAAV), and 216-236 (PGVF…FAAI). Positions 56-237 (LPATLAIISI…LGILGFAAIK (182 aa)) constitute an ABC transmembrane type-1 domain.

It belongs to the binding-protein-dependent transport system permease family. As to quaternary structure, the complex is likely composed of an ATP-binding protein (ThiZ), a transmembrane protein (ThiX) and a solute-binding protein (ThiY).

The protein localises to the cell membrane. It functions in the pathway cofactor biosynthesis; thiamine diphosphate biosynthesis. Participates in a thiamine pyrimidine salvage pathway as part of the ABC transporter complex ThiXYZ involved in the import of thiamine degradation products such as the formylaminopyrimidine N-formyl-4-amino-5-aminomethyl-2-methylpyrimidine (FAMP). Is probably responsible for the translocation of the substrate across the membrane. The polypeptide is Formylaminopyrimidine transport permease protein ThiX (Halalkalibacterium halodurans (strain ATCC BAA-125 / DSM 18197 / FERM 7344 / JCM 9153 / C-125) (Bacillus halodurans)).